Reading from the N-terminus, the 711-residue chain is Polyribonucleotide nucleotidyltransferase (711 aa).

Residues Asp490 and Asp496 each contribute to the Mg(2+) site. Residues 557–619 (PRIETMTIPK…KCIDDAMRII (63 aa)) enclose the KH domain. The 71-residue stretch at 629–699 (GEVYVGKVRS…KTGKFKLSHK (71 aa)) folds into the S1 motif domain.

This sequence belongs to the polyribonucleotide nucleotidyltransferase family. Requires Mg(2+) as cofactor.

It is found in the cytoplasm. It catalyses the reaction RNA(n+1) + phosphate = RNA(n) + a ribonucleoside 5'-diphosphate. Its function is as follows. Involved in mRNA degradation. Catalyzes the phosphorolysis of single-stranded polyribonucleotides processively in the 3'- to 5'-direction. The chain is Polyribonucleotide nucleotidyltransferase from Phocaeicola vulgatus (strain ATCC 8482 / DSM 1447 / JCM 5826 / CCUG 4940 / NBRC 14291 / NCTC 11154) (Bacteroides vulgatus).